The primary structure comprises 243 residues: Transmembrane protein 174 (243 aa).

The next 2 helical transmembrane spans lie at 40–60 (LLFS…MGWI) and 73–93 (LLGP…VCKF).

In terms of assembly, interacts with SLC34A1; regulates SLC34A1 internalization by PTH and FGF23. Predominantly expressed in kidney. Selectively localized in the apical membrane of renal proximal tubule epithelial cells.

The protein localises to the endoplasmic reticulum membrane. Its subcellular location is the apical cell membrane. Functionally, regulator of plasma phosphate homeostasis. Decreases serum inorganic phosphate (Pi) uptake by regulating the sodium-phosphate cotransporter SLC34A1 trafficking by PTH and FGF23 in the kidney. The protein is Transmembrane protein 174 (TMEM174) of Homo sapiens (Human).